Here is a 242-residue protein sequence, read N- to C-terminus: RxLR effector protein PexRD15 (242 aa).

A signal peptide spans 1 to 24 (MMKSLYAVNLVLLLLLAFFAPAPA). The short motif at 48–66 (RLLRAHSSDKEEQKEEEER) is the RxLR-dEER element.

The protein belongs to the RxLR effector family.

Its subcellular location is the secreted. It is found in the host cell membrane. Functionally, effector that enhances P.infestans colonization of Nicotiana benthamiana leaves. The polypeptide is RxLR effector protein PexRD15 (Phytophthora infestans (strain T30-4) (Potato late blight agent)).